A 305-amino-acid polypeptide reads, in one-letter code: Dihydroorotate dehydrogenase B (NAD(+)), catalytic subunit (305 aa).

FMN-binding positions include serine 21 and 45-46 (KG). Substrate contacts are provided by residues lysine 45 and 69 to 73 (NAVGL). The FMN site is built by asparagine 99 and asparagine 127. Asparagine 127 contacts substrate. Catalysis depends on cysteine 130, which acts as the Nucleophile. 2 residues coordinate FMN: lysine 165 and isoleucine 191. 192 to 193 (NT) serves as a coordination point for substrate. FMN is bound by residues glycine 217, 243 to 244 (GG), and 265 to 266 (GT).

The protein belongs to the dihydroorotate dehydrogenase family. Type 1 subfamily. In terms of assembly, heterotetramer of 2 PyrK and 2 PyrD type B subunits. It depends on FMN as a cofactor.

The protein localises to the cytoplasm. The enzyme catalyses (S)-dihydroorotate + NAD(+) = orotate + NADH + H(+). The protein operates within pyrimidine metabolism; UMP biosynthesis via de novo pathway; orotate from (S)-dihydroorotate (NAD(+) route): step 1/1. In terms of biological role, catalyzes the conversion of dihydroorotate to orotate with NAD(+) as electron acceptor. The polypeptide is Dihydroorotate dehydrogenase B (NAD(+)), catalytic subunit (pyrD) (Parabacteroides distasonis (strain ATCC 8503 / DSM 20701 / CIP 104284 / JCM 5825 / NCTC 11152)).